Reading from the N-terminus, the 392-residue chain is Adenosine 3'-phospho 5'-phosphosulfate transporter 2 (392 aa).

Residues 11–35 (NINGSASGQQAPTSNSPTLTRKSSS) form a disordered region. 10 helical membrane passes run 62 to 82 (CAGV…IFTV), 87 to 107 (PFGW…GLVE), 136 to 156 (LVLA…LGYL), 159 to 179 (PTQV…SILI), 185 to 205 (GPLD…FTLA), 212 to 232 (NFNL…AAIG), 249 to 269 (VVFY…LVTG), 286 to 306 (FGYG…VLAL), 314 to 334 (IAAT…FVLF), and 338 to 358 (FTVQ…LNVY).

It belongs to the nucleotide-sugar transporter family. SLC35B subfamily.

The protein resides in the golgi apparatus membrane. Functionally, mediates the transport of adenosine 3'-phospho 5'-phosphosulfate (PAPS), from cytosol into Golgi. PAPS is a universal sulfuryl donor for sulfation events that take place in the Golgi. Essential for viability. Involved in glycosaminoglycan synthesis and the subsequent signaling. May be involved in hh and dpp signaling by controlling the sulfation of heparan sulfate (HS). This chain is Adenosine 3'-phospho 5'-phosphosulfate transporter 2, found in Drosophila pseudoobscura pseudoobscura (Fruit fly).